The sequence spans 142 residues: Hemoglobin larval subunit alpha (142 aa).

The region spanning 2-142 (VLSAEEKALV…VSAVLTSKYR (141 aa)) is the Globin domain. O2 is bound at residue histidine 59. Residue histidine 88 coordinates heme b.

Belongs to the globin family. As to quaternary structure, heterotetramer of two alpha chains and two beta chains. Red blood cells.

Functionally, involved in oxygen transport from the lung to the various peripheral tissues. The chain is Hemoglobin larval subunit alpha from Pleurodeles waltl (Iberian ribbed newt).